The following is a 278-amino-acid chain: ATP synthase subunit delta (278 aa).

This sequence belongs to the ATPase delta chain family. F-type ATPases have 2 components, F(1) - the catalytic core - and F(0) - the membrane proton channel. F(1) has five subunits: alpha(3), beta(3), gamma(1), delta(1), epsilon(1). F(0) has three main subunits: a(1), b(2) and c(10-14). The alpha and beta chains form an alternating ring which encloses part of the gamma chain. F(1) is attached to F(0) by a central stalk formed by the gamma and epsilon chains, while a peripheral stalk is formed by the delta and b chains.

It localises to the cell membrane. Its function is as follows. F(1)F(0) ATP synthase produces ATP from ADP in the presence of a proton or sodium gradient. F-type ATPases consist of two structural domains, F(1) containing the extramembraneous catalytic core and F(0) containing the membrane proton channel, linked together by a central stalk and a peripheral stalk. During catalysis, ATP synthesis in the catalytic domain of F(1) is coupled via a rotary mechanism of the central stalk subunits to proton translocation. In terms of biological role, this protein is part of the stalk that links CF(0) to CF(1). It either transmits conformational changes from CF(0) to CF(1) or is implicated in proton conduction. The sequence is that of ATP synthase subunit delta from Bifidobacterium longum (strain DJO10A).